Here is a 576-residue protein sequence, read N- to C-terminus: Probable lysosomal cobalamin transporter (576 aa).

A run of 10 helical transmembrane segments spans residues 8-28 (LIWA…SVFI), 40-60 (VVTF…LLLP), 98-118 (YLLY…VYFW), 145-165 (TISF…VPVA), 188-208 (VLTF…ILYT), 312-332 (LLGG…MLLT), 347-367 (GYIL…VQSA), 377-397 (LTVV…TIGI), 419-439 (LTTA…PMLV), and 503-523 (FFGT…LLVL). The segment at 549 to 576 (RLLTSSARGVGDTYQSVGGRNNFSTRAG) is disordered. Polar residues predominate over residues 561-576 (TYQSVGGRNNFSTRAG). Asn-570 carries N-linked (GlcNAc...) asparagine glycosylation.

It belongs to the LIMR family. LMBRD1 subfamily.

It is found in the lysosome membrane. In terms of biological role, probable lysosomal cobalamin transporter. Required to export cobalamin from lysosomes allowing its conversion to cofactors. The protein is Probable lysosomal cobalamin transporter of Aspergillus niger (strain ATCC MYA-4892 / CBS 513.88 / FGSC A1513).